A 452-amino-acid polypeptide reads, in one-letter code: Phosphoglucosamine mutase (452 aa).

Ser103 functions as the Phosphoserine intermediate in the catalytic mechanism. Residues Ser103, Asp243, Asp245, and Asp247 each coordinate Mg(2+). The residue at position 103 (Ser103) is a Phosphoserine.

This sequence belongs to the phosphohexose mutase family. Mg(2+) is required as a cofactor. In terms of processing, activated by phosphorylation.

The catalysed reaction is alpha-D-glucosamine 1-phosphate = D-glucosamine 6-phosphate. In terms of biological role, catalyzes the conversion of glucosamine-6-phosphate to glucosamine-1-phosphate. The chain is Phosphoglucosamine mutase from Exiguobacterium sp. (strain ATCC BAA-1283 / AT1b).